The sequence spans 244 residues: Demethylmenaquinone methyltransferase (244 aa).

S-adenosyl-L-methionine-binding positions include threonine 65, aspartate 86, and aspartate 114–alanine 115.

It belongs to the class I-like SAM-binding methyltransferase superfamily. MenG/UbiE family.

The catalysed reaction is a 2-demethylmenaquinol + S-adenosyl-L-methionine = a menaquinol + S-adenosyl-L-homocysteine + H(+). The protein operates within quinol/quinone metabolism; menaquinone biosynthesis; menaquinol from 1,4-dihydroxy-2-naphthoate: step 2/2. In terms of biological role, methyltransferase required for the conversion of demethylmenaquinol (DMKH2) to menaquinol (MKH2). The sequence is that of Demethylmenaquinone methyltransferase from Lactobacillus johnsonii (strain CNCM I-12250 / La1 / NCC 533).